The primary structure comprises 339 residues: MamK-like protein (339 aa).

Residues 18 to 19 (YS), aspartate 74, 162 to 164 (AWT), and 216 to 220 (KEQFA) contribute to the ATP site.

It belongs to the FtsA/MreB family. MamK subfamily. Forms cytoplasmic filament polymers. Forms filaments with MamK.

Its subcellular location is the cytoplasm. It localises to the cytoskeleton. The catalysed reaction is ATP + H2O = ADP + phosphate + H(+). Its function is as follows. Protein with ATPase activity which forms pole-to-pole filaments in vivo, probably with MamK. Efficient filament formation requires MamK. Probably promotes turnover of MamK filaments, by providing a monomer pool. In vivo, in the absence of its paralog MamK, forms thin filaments from pole to pole. In vitro forms straight filaments and bundles in the absence of ATP. Filament formation is triggered by KCl and MgCl(2); polymerizes more slowly and makes thinner filaments than MamK. Expression in E.coli yields a filament in the cell's longitudinal axis; the protein nucleates at one pole or the cell septum. The polypeptide is MamK-like protein (Paramagnetospirillum magneticum (strain ATCC 700264 / AMB-1) (Magnetospirillum magneticum)).